Consider the following 393-residue polypeptide: N-lysine methyltransferase KMT5A (393 aa).

A disordered region spans residues 68-88 (PGPEMVERRGPGRPRTDGENV). The span at 72 to 85 (MVERRGPGRPRTDG) shows a compositional bias: basic and acidic residues. Ser100 bears the Phosphoserine mark. A coiled-coil region spans residues 134–163 (RKREEKRNAGNAVRSAMKSEEQKIKDARKG). The interval 135–241 (KREEKRNAGN…SRKSKAELQS (107 aa)) is disordered. Positions 150–162 (MKSEEQKIKDARK) are enriched in basic and acidic residues. An N6-acetyllysine modification is found at Lys162. Thr181 is modified (phosphothreonine). Basic residues predominate over residues 197 to 213 (ALKKPIKGKQAPRKKAQ). Residues 257–378 (EGMKIDLIDG…AGEELLYDYG (122 aa)) enclose the SET domain. S-adenosyl-L-methionine-binding positions include 267–269 (KGR), Tyr312, and 339–340 (NH).

It belongs to the class V-like SAM-binding methyltransferase superfamily. Histone-lysine methyltransferase family. PR/SET subfamily. As to quaternary structure, interacts with L3MBTL1. Interacts with SIRT2 (phosphorylated form); the interaction is direct, stimulates KMT5A-mediated methyltransferase activity at histone H4 'Lys-20' (H4K20me1) and is increased in a H(2)O(2)-induced oxidative stress-dependent manner. Post-translationally, acetylated at Lys-162; does not affect methyltransferase activity. Deacetylated at Lys-162 possibly by SIRT2; does not change methyltransferase activity. Ubiquitinated and degraded by the DCX(DTL) complex.

The protein localises to the nucleus. It is found in the chromosome. It carries out the reaction L-lysyl(20)-[histone H4] + S-adenosyl-L-methionine = N(6)-methyl-L-lysyl(20)-[histone H4] + S-adenosyl-L-homocysteine + H(+). It catalyses the reaction L-lysyl-[protein] + S-adenosyl-L-methionine = N(6)-methyl-L-lysyl-[protein] + S-adenosyl-L-homocysteine + H(+). In terms of biological role, protein-lysine N-methyltransferase that monomethylates both histones and non-histone proteins. Specifically monomethylates 'Lys-20' of histone H4 (H4K20me1). H4K20me1 is enriched during mitosis and represents a specific tag for epigenetic transcriptional repression. Mainly functions in euchromatin regions, thereby playing a central role in the silencing of euchromatic genes. Required for cell proliferation, probably by contributing to the maintenance of proper higher-order structure of DNA during mitosis. Involved in chromosome condensation and proper cytokinesis. Nucleosomes are preferred as substrate compared to free histones. Mediates monomethylation of p53/TP53 at 'Lys-382', leading to repress p53/TP53-target genes. Plays a negative role in TGF-beta response regulation and a positive role in cell migration. This chain is N-lysine methyltransferase KMT5A, found in Homo sapiens (Human).